Consider the following 197-residue polypeptide: Probable GTP-binding protein EngB (197 aa).

In terms of domain architecture, EngB-type G spans 22 to 195 (KRIEIAFVGR…LKVLESVIDF (174 aa)). GTP contacts are provided by residues 30–37 (GRSNVGKS), 57–61 (GKTRL), 75–78 (DLPG), 142–145 (TKVD), and 174–176 (FSS). Serine 37 and threonine 59 together coordinate Mg(2+).

This sequence belongs to the TRAFAC class TrmE-Era-EngA-EngB-Septin-like GTPase superfamily. EngB GTPase family. Mg(2+) is required as a cofactor.

Functionally, necessary for normal cell division and for the maintenance of normal septation. The chain is Probable GTP-binding protein EngB from Clostridium kluyveri (strain ATCC 8527 / DSM 555 / NBRC 12016 / NCIMB 10680 / K1).